The chain runs to 346 residues: Protein pelota homolog (346 aa).

This sequence belongs to the eukaryotic release factor 1 family. Pelota subfamily. As to quaternary structure, monomer. The cofactor is a divalent metal cation.

Its subcellular location is the cytoplasm. Its function is as follows. May function in recognizing stalled ribosomes, interact with stem-loop structures in stalled mRNA molecules, and effect endonucleolytic cleavage of the mRNA. May play a role in the release non-functional ribosomes and degradation of damaged mRNAs. Has endoribonuclease activity. The polypeptide is Protein pelota homolog (Ignicoccus hospitalis (strain KIN4/I / DSM 18386 / JCM 14125)).